A 179-amino-acid chain; its full sequence is Large ribosomal subunit protein uL5 (179 aa).

The protein belongs to the universal ribosomal protein uL5 family. In terms of assembly, part of the 50S ribosomal subunit; part of the 5S rRNA/L5/L18/L25 subcomplex. Contacts the 5S rRNA and the P site tRNA. Forms a bridge to the 30S subunit in the 70S ribosome.

In terms of biological role, this is one of the proteins that bind and probably mediate the attachment of the 5S RNA into the large ribosomal subunit, where it forms part of the central protuberance. In the 70S ribosome it contacts protein S13 of the 30S subunit (bridge B1b), connecting the 2 subunits; this bridge is implicated in subunit movement. Contacts the P site tRNA; the 5S rRNA and some of its associated proteins might help stabilize positioning of ribosome-bound tRNAs. The sequence is that of Large ribosomal subunit protein uL5 from Anoxybacillus flavithermus (strain DSM 21510 / WK1).